Reading from the N-terminus, the 396-residue chain is Elongation factor Tu (396 aa).

The tr-type G domain maps to 10 to 206; sequence KPHVNIGTIG…ACDTYIPAPV (197 aa). Positions 19–26 are G1; it reads GHVDHGKT. A GTP-binding site is contributed by 19–26; that stretch reads GHVDHGKT. A Mg(2+)-binding site is contributed by T26. The segment at 60 to 64 is G2; that stretch reads GITIS. Positions 81–84 are G3; sequence DCPG. GTP is bound by residues 81 to 85 and 136 to 139; these read DCPGH and NKVD. The interval 136–139 is G4; that stretch reads NKVD. The segment at 174–176 is G5; sequence SAL.

It belongs to the TRAFAC class translation factor GTPase superfamily. Classic translation factor GTPase family. EF-Tu/EF-1A subfamily. Monomer.

The protein resides in the cytoplasm. The enzyme catalyses GTP + H2O = GDP + phosphate + H(+). GTP hydrolase that promotes the GTP-dependent binding of aminoacyl-tRNA to the A-site of ribosomes during protein biosynthesis. The polypeptide is Elongation factor Tu (Bdellovibrio bacteriovorus (strain ATCC 15356 / DSM 50701 / NCIMB 9529 / HD100)).